The primary structure comprises 385 residues: Branched-chain-amino-acid aminotransferase, cytosolic (385 aa).

Lys221 is modified (N6-(pyridoxal phosphate)lysine).

Belongs to the class-IV pyridoxal-phosphate-dependent aminotransferase family. As to quaternary structure, homodimer. The cofactor is pyridoxal 5'-phosphate. Expressed in muscles.

The protein localises to the cytoplasm. It catalyses the reaction L-leucine + 2-oxoglutarate = 4-methyl-2-oxopentanoate + L-glutamate. The enzyme catalyses L-isoleucine + 2-oxoglutarate = (S)-3-methyl-2-oxopentanoate + L-glutamate. The catalysed reaction is L-valine + 2-oxoglutarate = 3-methyl-2-oxobutanoate + L-glutamate. Functionally, catalyzes the first reaction in the catabolism of the essential branched chain amino acids leucine, isoleucine, and valine. This chain is Branched-chain-amino-acid aminotransferase, cytosolic (BCAT1), found in Ovis aries (Sheep).